The sequence spans 146 residues: Hemoglobin subunit beta (146 aa).

Residues 2-146 (QWAAEEKQLI…VAHALARKYH (145 aa)) form the Globin domain. His63 and His92 together coordinate heme b.

It belongs to the globin family. As to quaternary structure, heterotetramer of two alpha chains and two beta chains. As to expression, red blood cells.

In terms of biological role, involved in oxygen transport from the lung to the various peripheral tissues. The chain is Hemoglobin subunit beta (HBB) from Accipiter gentilis (Northern goshawk).